Here is a 476-residue protein sequence, read N- to C-terminus: Serine/threonine-protein kinase Chk1 (476 aa).

Residues 1-265 form an interaction with CLSPN region; it reads MAVPFVEDWD…IPDIKKDRWY (265 aa). The region spanning 9-265 is the Protein kinase domain; the sequence is WDLVQTLGEG…IPDIKKDRWY (257 aa). ATP is bound by residues 15–23 and Lys-38; that span reads LGEGAYGEV. Catalysis depends on Asp-130, which acts as the Proton acceptor. A Glycyl lysine isopeptide (Lys-Gly) (interchain with G-Cter in ubiquitin) cross-link involves residue Lys-132. The interval 267-329 is disordered; that stretch reads KPLNRGAKRP…EPRTGLSLWD (63 aa). A Phosphoserine; by PKB/AKT1 modification is found at Ser-280. Over residues 280 to 291 the composition is skewed to low complexity; sequence SGGMSESSSGFS. Phosphoserine occurs at positions 286, 296, and 301. Over residues 298-320 the composition is skewed to polar residues; that stretch reads LDFSPINSGSSEENVKFSSSQPE. Phosphoserine; by ATM and ATR is present on residues Ser-317 and Ser-345. An autoinhibitory region region spans residues 391–476; it reads QCLKETFEKL…SSQKVWFPVT (86 aa). A Glycyl lysine isopeptide (Lys-Gly) (interchain with G-Cter in ubiquitin) cross-link involves residue Lys-436. Phosphoserine is present on residues Ser-463, Ser-467, and Ser-468.

It belongs to the protein kinase superfamily. CAMK Ser/Thr protein kinase family. NIM1 subfamily. Interacts (phosphorylated by ATR) with RAD51. Interacts with and phosphorylates CLSPN, an adapter protein that regulates the ATR-dependent phosphorylation of CHEK1. Interacts with BRCA1. Interacts with and phosphorylates CDC25A, CDC25B and CDC25C. Interacts with FBXO6, which regulates CHEK1. Interacts with PPM1D, which regulates CHEK1 through dephosphorylation. Interacts with TIMELESS; DNA damage-dependent. Interacts with FEM1B; activates CHEK1 in response to stress. Interacts with TLK1. Interacts with XPO1 and YWHAZ. Interacts with CDK5RAP3; antagonizes CHEK1. In terms of processing, phosphorylated by ATR in a RAD17-dependent manner in response to ultraviolet irradiation and inhibition of DNA replication. Phosphorylated by ATM in response to ionizing irradiation. ATM and ATR can both phosphorylate Ser-317 and Ser-345 and this results in enhanced kinase activity. Phosphorylation at Ser-345 induces a change in the conformation of the protein, activates the kinase activity and is a prerequisite for interaction with FBXO6 and subsequent ubiquitination at Lys-436. Phosphorylation at Ser-345 also increases binding to 14-3-3 proteins and promotes nuclear retention. Conversely, dephosphorylation at Ser-345 by PPM1D may contribute to exit from checkpoint mediated cell cycle arrest. Phosphorylation at Ser-280 by AKT1/PKB, may promote mono and/or diubiquitination. Also phosphorylated at undefined residues during mitotic arrest, resulting in decreased activity. Post-translationally, ubiquitinated. Mono or diubiquitination promotes nuclear exclusion. The activated form (phosphorylated on Ser-345) is polyubiquitinated at Lys-436 by some SCF-type E3 ubiquitin ligase complex containing FBXO6 promoting its degradation. Ubiquitination and degradation are required to terminate the checkpoint and ensure that activated CHEK1 does not accumulate as cells progress through S phase, when replication forks encounter transient impediments during normal DNA replication. 'Lys-63'-mediated ubiquitination by TRAF4 at Lys-132 activates cell cycle arrest and activation of DNA repair. Proteolytically cleaved at the C-terminus by SPRTN during normal DNA replication, thereby promoting CHEK1 removal from chromatin and activating the protein kinase activity. Expressed in brain, heart, liver, lung, skeletal muscle, spleen and testis. In terms of tissue distribution, expressed only in liver.

It localises to the nucleus. It is found in the chromosome. The protein resides in the cytoplasm. Its subcellular location is the cytoskeleton. The protein localises to the microtubule organizing center. It localises to the centrosome. The catalysed reaction is L-seryl-[protein] + ATP = O-phospho-L-seryl-[protein] + ADP + H(+). It catalyses the reaction L-threonyl-[protein] + ATP = O-phospho-L-threonyl-[protein] + ADP + H(+). With respect to regulation, activated through phosphorylation predominantly by ATR but also by ATM in response to DNA damage or inhibition of DNA replication. Activation is modulated by several mediators including CLSPN, BRCA1 and FEM1B. Proteolytic cleavage at the C-terminus by SPRTN during normal DNA replication activates the protein kinase activity. In terms of biological role, serine/threonine-protein kinase which is required for checkpoint-mediated cell cycle arrest and activation of DNA repair in response to the presence of DNA damage or unreplicated DNA. May also negatively regulate cell cycle progression during unperturbed cell cycles. This regulation is achieved by a number of mechanisms that together help to preserve the integrity of the genome. Recognizes the substrate consensus sequence [R-X-X-S/T]. Binds to and phosphorylates CDC25A, CDC25B and CDC25C. Phosphorylation of CDC25A at 'Ser-178' and 'Thr-507' and phosphorylation of CDC25C at 'Ser-216' creates binding sites for 14-3-3 proteins which inhibit CDC25A and CDC25C. Phosphorylation of CDC25A at 'Ser-76', 'Ser-124', 'Ser-178', 'Ser-279' and 'Ser-293' promotes proteolysis of CDC25A. Phosphorylation of CDC25A at 'Ser-76' primes the protein for subsequent phosphorylation at 'Ser-79', 'Ser-82' and 'Ser-88' by NEK11, which is required for polyubiquitination and degradation of CDCD25A. Inhibition of CDC25 leads to increased inhibitory tyrosine phosphorylation of CDK-cyclin complexes and blocks cell cycle progression. Also phosphorylates NEK6. Binds to and phosphorylates RAD51 at 'Thr-309', which promotes the release of RAD51 from BRCA2 and enhances the association of RAD51 with chromatin, thereby promoting DNA repair by homologous recombination. Phosphorylates multiple sites within the C-terminus of TP53, which promotes activation of TP53 by acetylation and promotes cell cycle arrest and suppression of cellular proliferation. Also promotes repair of DNA cross-links through phosphorylation of FANCE. Binds to and phosphorylates TLK1 at 'Ser-743', which prevents the TLK1-dependent phosphorylation of the chromatin assembly factor ASF1A. This may enhance chromatin assembly both in the presence or absence of DNA damage. May also play a role in replication fork maintenance through regulation of PCNA. May regulate the transcription of genes that regulate cell-cycle progression through the phosphorylation of histones. Phosphorylates histone H3.1 (to form H3T11ph), which leads to epigenetic inhibition of a subset of genes. May also phosphorylate RB1 to promote its interaction with the E2F family of transcription factors and subsequent cell cycle arrest. Phosphorylates SPRTN, promoting SPRTN recruitment to chromatin. Reduces replication stress and activates the G2/M checkpoint, by phosphorylating and inactivating PABIR1/FAM122A and promoting the serine/threonine-protein phosphatase 2A-mediated dephosphorylation and stabilization of WEE1 levels and activity. This is Serine/threonine-protein kinase Chk1 (Chek1) from Rattus norvegicus (Rat).